A 525-amino-acid polypeptide reads, in one-letter code: Alcohol O-acetyltransferase 1 (525 aa).

The membrane association stretch occupies residues 24 to 41 (GHARRMGSVEDLYVALNR). Residues His191 and Asp195 each act as charge relay system in the active site. The membrane association stretch occupies residues 508–525 (QESLEELCSIYKALLLGP).

It belongs to the ATF1 alcohol acetyltransferase family.

It localises to the lipid droplet. Its subcellular location is the endoplasmic reticulum membrane. The enzyme catalyses an aliphatic alcohol + acetyl-CoA = an acetyl ester + CoA. It catalyses the reaction a fatty acyl-CoA + H2O = a fatty acid + CoA + H(+). The catalysed reaction is 3-methylbutanol + acetyl-CoA = 3-methylbutyl acetate + CoA. With respect to regulation, found to be inhibited by cadmium, copper, zinc and mercurium divalent cations and sulfhydryl reagents. Inhibited by the addition of unsaturated fatty acids to the culture. Its function is as follows. Major alcohol O-acetyltransferase that uses acetyl-CoA to synthesize acetate esters from various alcohols, producing ethyl acetate, isoamyl acetate, isobutyl acetate, butyl acetate, hexyl acetate, heptyl acetate and octyl acetate. The alcohol acyltransferase activity is promiscuous with regard to alcohol but relatively specific for acetyl-CoA since ATF1 does not use any other acyl-CoAs (C3, C4, C5, C6, C8, C10, C12). Acts also as an efficient thioesterase in vitro with specificity towards medium-chain-length acyl-CoAs. In natural environments, the production of aromatic volatile metabolites promotes dispersal through insect vectors. In Saccharomyces cerevisiae (strain ATCC 204508 / S288c) (Baker's yeast), this protein is Alcohol O-acetyltransferase 1.